The chain runs to 422 residues: UDP-N-acetylglucosamine 1-carboxyvinyltransferase (422 aa).

22 to 23 (KN) provides a ligand contact to phosphoenolpyruvate. Arginine 92 serves as a coordination point for UDP-N-acetyl-alpha-D-glucosamine. Catalysis depends on cysteine 116, which acts as the Proton donor. A 2-(S-cysteinyl)pyruvic acid O-phosphothioketal modification is found at cysteine 116. Residues 121-125 (RPVDQ), aspartate 307, and isoleucine 329 each bind UDP-N-acetyl-alpha-D-glucosamine.

The protein belongs to the EPSP synthase family. MurA subfamily.

It localises to the cytoplasm. It catalyses the reaction phosphoenolpyruvate + UDP-N-acetyl-alpha-D-glucosamine = UDP-N-acetyl-3-O-(1-carboxyvinyl)-alpha-D-glucosamine + phosphate. It functions in the pathway cell wall biogenesis; peptidoglycan biosynthesis. In terms of biological role, cell wall formation. Adds enolpyruvyl to UDP-N-acetylglucosamine. The protein is UDP-N-acetylglucosamine 1-carboxyvinyltransferase of Psychrobacter arcticus (strain DSM 17307 / VKM B-2377 / 273-4).